Reading from the N-terminus, the 176-residue chain is NAD(P)H-quinone oxidoreductase subunit 6, chloroplastic (176 aa).

5 consecutive transmembrane segments (helical) span residues 10-30, 32-52, 61-81, 92-112, and 152-172; these read FLLVFLGLGLILGGLGVVLLP, PIYSAFSLGLVFVCISLFYIL, AQLLIYVGAINVLIIFAVMFI, LWTVGDGITSVVCTSLFVSLI, and FFLPFEFISIILLVALIGAIA.

Belongs to the complex I subunit 6 family. As to quaternary structure, NDH is composed of at least 16 different subunits, 5 of which are encoded in the nucleus.

Its subcellular location is the plastid. It localises to the chloroplast thylakoid membrane. The enzyme catalyses a plastoquinone + NADH + (n+1) H(+)(in) = a plastoquinol + NAD(+) + n H(+)(out). It carries out the reaction a plastoquinone + NADPH + (n+1) H(+)(in) = a plastoquinol + NADP(+) + n H(+)(out). NDH shuttles electrons from NAD(P)H:plastoquinone, via FMN and iron-sulfur (Fe-S) centers, to quinones in the photosynthetic chain and possibly in a chloroplast respiratory chain. The immediate electron acceptor for the enzyme in this species is believed to be plastoquinone. Couples the redox reaction to proton translocation, and thus conserves the redox energy in a proton gradient. This chain is NAD(P)H-quinone oxidoreductase subunit 6, chloroplastic (ndhG), found in Lactuca sativa (Garden lettuce).